The following is a 741-amino-acid chain: Condensin complex subunit 2 (741 aa).

The disordered stretch occupies residues 1-67; sequence MGPPGPALPA…NDDEKERLQR (67 aa). Ser15, Ser25, and Ser28 each carry phosphoserine. The residue at position 49 (Thr49) is a Phosphothreonine. A phosphoserine mark is found at Ser70, Ser78, Ser81, Ser87, Ser89, Ser92, Ser96, Ser201, and Ser233. The span at 361–377 shows a compositional bias: acidic residues; it reads CGDFPDGSLGDDFDAND. The disordered stretch occupies residues 361-383; it reads CGDFPDGSLGDDFDANDEPDHTA. Ser432 is modified (phosphoserine). The tract at residues 447 to 467 is disordered; the sequence is FRPRRKQDAPSQSENKKKSTK. Lys488 participates in a covalent cross-link: Glycyl lysine isopeptide (Lys-Gly) (interchain with G-Cter in SUMO2). Ser496 carries the post-translational modification Phosphoserine. A phosphothreonine mark is found at Thr598 and Thr605. Lys637 is modified (N6-acetyllysine).

The protein belongs to the CND2 (condensin subunit 2) family. As to quaternary structure, component of the condensin complex, which contains the SMC2 and SMC4 heterodimer, and three non SMC subunits that probably regulate the complex: NCAPH/BRRN1, NCAPD2/CAPD2 and NCAPG. Post-translationally, phosphorylated by CDK1. Its phosphorylation, as well as that of NCAPD2 and NCAPG subunits, activates the condensin complex and is required for chromosome condensation. In terms of tissue distribution, widely expressed at low level. Expressed in proliferating cells.

The protein resides in the nucleus. The protein localises to the cytoplasm. It localises to the chromosome. Functionally, regulatory subunit of the condensin complex, a complex required for conversion of interphase chromatin into mitotic-like condense chromosomes. The condensin complex probably introduces positive supercoils into relaxed DNA in the presence of type I topoisomerases and converts nicked DNA into positive knotted forms in the presence of type II topoisomerases. Early in neurogenesis, may play an essential role to ensure accurate mitotic chromosome condensation in neuron stem cells, ultimately affecting neuron pool and cortex size. The polypeptide is Condensin complex subunit 2 (Homo sapiens (Human)).